An 800-amino-acid chain; its full sequence is Protein MEI2-like 5 (800 aa).

2 RRM domains span residues 168 to 241 and 253 to 326; these read RTLF…FSIP and GTLV…PSRP. Residues S384 and S390 each carry the phosphoserine modification. 2 disordered regions span residues 470 to 489 and 776 to 800; these read GSPN…TSST and VVDE…RERS. Positions 471–488 are enriched in low complexity; that stretch reads SPNARSEPSSSSVWSTSS. 2 positions are modified to phosphoserine: S789 and S792.

Functionally, probable RNA-binding protein that plays a role in meiosis and vegetative growth. The protein is Protein MEI2-like 5 (ML5) of Arabidopsis thaliana (Mouse-ear cress).